A 452-amino-acid polypeptide reads, in one-letter code: Membrane-bound lytic murein transglycosylase D (452 aa).

An N-terminal signal peptide occupies residues 1–15; that stretch reads MKAKAILLASVLLVG. A lipid anchor (N-palmitoyl cysteine) is attached at C16. A lipid anchor (S-diacylglycerol cysteine) is attached at C16. Positions 113 to 198 are slt-type domain; the sequence is NMPMELVLLP…LLTVAAYNSG (86 aa). Residue E125 is part of the active site. 2 LysM domains span residues 341–384 and 400–448; these read RVYT…SLTI and ITYR…KNNN.

It belongs to the transglycosylase Slt family.

It localises to the cell membrane. The enzyme catalyses Exolytic cleavage of the (1-&gt;4)-beta-glycosidic linkage between N-acetylmuramic acid (MurNAc) and N-acetylglucosamine (GlcNAc) residues in peptidoglycan, from either the reducing or the non-reducing ends of the peptidoglycan chains, with concomitant formation of a 1,6-anhydrobond in the MurNAc residue.. Functionally, murein-degrading enzyme. May play a role in recycling of muropeptides during cell elongation and/or cell division. This is Membrane-bound lytic murein transglycosylase D (mltD) from Escherichia coli O6:H1 (strain CFT073 / ATCC 700928 / UPEC).